The primary structure comprises 269 residues: 4-hydroxy-tetrahydrodipicolinate reductase (269 aa).

NAD(+) contacts are provided by residues 8 to 13 and E34; that span reads GAAGRM. R35 lines the NADP(+) pocket. NAD(+)-binding positions include 98 to 100 and 122 to 125; these read GTT and APNY. The Proton donor/acceptor role is filled by H155. H156 is a (S)-2,3,4,5-tetrahydrodipicolinate binding site. K159 functions as the Proton donor in the catalytic mechanism. 165-166 is a binding site for (S)-2,3,4,5-tetrahydrodipicolinate; that stretch reads GT.

Belongs to the DapB family.

It is found in the cytoplasm. It catalyses the reaction (S)-2,3,4,5-tetrahydrodipicolinate + NAD(+) + H2O = (2S,4S)-4-hydroxy-2,3,4,5-tetrahydrodipicolinate + NADH + H(+). The enzyme catalyses (S)-2,3,4,5-tetrahydrodipicolinate + NADP(+) + H2O = (2S,4S)-4-hydroxy-2,3,4,5-tetrahydrodipicolinate + NADPH + H(+). The protein operates within amino-acid biosynthesis; L-lysine biosynthesis via DAP pathway; (S)-tetrahydrodipicolinate from L-aspartate: step 4/4. In terms of biological role, catalyzes the conversion of 4-hydroxy-tetrahydrodipicolinate (HTPA) to tetrahydrodipicolinate. The protein is 4-hydroxy-tetrahydrodipicolinate reductase of Vibrio parahaemolyticus serotype O3:K6 (strain RIMD 2210633).